The chain runs to 147 residues: Deoxyuridine 5'-triphosphate nucleotidohydrolase (147 aa).

Residues 63-65, asparagine 76, and 80-82 contribute to the substrate site; these read RSG and TID.

This sequence belongs to the dUTPase family. It depends on Mg(2+) as a cofactor.

It carries out the reaction dUTP + H2O = dUMP + diphosphate + H(+). It participates in pyrimidine metabolism; dUMP biosynthesis; dUMP from dCTP (dUTP route): step 2/2. Its function is as follows. This enzyme is involved in nucleotide metabolism: it produces dUMP, the immediate precursor of thymidine nucleotides and it decreases the intracellular concentration of dUTP so that uracil cannot be incorporated into DNA. The polypeptide is Deoxyuridine 5'-triphosphate nucleotidohydrolase (Chlamydia felis (strain Fe/C-56) (Chlamydophila felis)).